Reading from the N-terminus, the 427-residue chain is MLFSKISSAILLTAASFALTSARPVSKQSDADDKLLALPLTSVNRKYSQTKHGQQAAEKLGGIKAFAEGDGSVDTPGLYDFDLEEYAIPVSIGTPGQDFYLLFDTGSSDTWVPHKGCDNSEGCVGKRFFDPSSSSTFKETDYNLNITYGTGGANGIYFRDSITVGGATVKQQTLAYVDNVSGPTAEQSPDSELFLDGMFGAAYPDNTAMEAEYGDTYNTVHVNLYKQGLISSPVFSVYMNTNDGGGQVVFGGANNTLLGGDIQYTDVLKSRGGYFFWDAPVTGVKIDGADAVSFDGAQAFTIDTGTNFFIAPSSFAEKVVKAALPDATESQQGYTVPCSKYQDSKTTFSLVLQKSGSSSDTIDVSVPISKMLLPVDKSGETCMFIVLPDGGNQFIVGNLFLRFFVNVYDFGKNRIGFAPLASGYENN.

The N-terminal stretch at 1–22 is a signal peptide; that stretch reads MLFSKISSAILLTAASFALTSA. Positions 23 to 66 are cleaved as a propeptide — activation peptide; it reads RPVSKQSDADDKLLALPLTSVNRKYSQTKHGQQAAEKLGGIKAF. Residues 86 to 418 form the Peptidase A1 domain; it reads YAIPVSIGTP…DFGKNRIGFA (333 aa). Asp-104 is a catalytic residue. An intrachain disulfide couples Cys-117 to Cys-123. N-linked (GlcNAc...) asparagine glycosylation occurs at Asn-254. Asp-303 is a catalytic residue. Cys-338 and Cys-382 are disulfide-bonded.

The protein belongs to the peptidase A1 family.

It carries out the reaction Hydrolysis of proteins, favoring hydrophobic residues at P1 and P1'. Clots milk. Does not accept Lys at P1, and hence does not activate trypsinogen.. This enzyme, capable of clotting milk is frequently used for cheese production. The chain is Mucorpepsin from Rhizomucor pusillus.